Reading from the N-terminus, the 183-residue chain is Peptidyl-tRNA hydrolase (183 aa).

Y15 is a binding site for tRNA. H20 serves as the catalytic Proton acceptor. Residues Y67 and N69 each coordinate tRNA.

It belongs to the PTH family. In terms of assembly, monomer.

It is found in the cytoplasm. The catalysed reaction is an N-acyl-L-alpha-aminoacyl-tRNA + H2O = an N-acyl-L-amino acid + a tRNA + H(+). Functionally, hydrolyzes ribosome-free peptidyl-tRNAs (with 1 or more amino acids incorporated), which drop off the ribosome during protein synthesis, or as a result of ribosome stalling. Its function is as follows. Catalyzes the release of premature peptidyl moieties from peptidyl-tRNA molecules trapped in stalled 50S ribosomal subunits, and thus maintains levels of free tRNAs and 50S ribosomes. The chain is Peptidyl-tRNA hydrolase from Chlamydia abortus (strain DSM 27085 / S26/3) (Chlamydophila abortus).